Reading from the N-terminus, the 756-residue chain is Disintegrin and metalloproteinase domain-containing protein 5 (756 aa).

Residues 1–16 (MFLLLVLLTGLGGMHA) form the signal peptide. A propeptide spanning residues 17–142 (DLNPHKTFLQ…AVSGFIHKIY (126 aa)) is cleaved from the precursor. At 17-698 (DLNPHKTFLQ…GRHAPFQKQR (682 aa)) the chain is on the extracellular side. Positions 183-380 (RYIEMHIVVD…NGLTCLQTNP (198 aa)) constitute a Peptidase M12B domain. 4 disulfide bridges follow: Cys-292–Cys-375, Cys-334–Cys-359, Cys-336–Cys-341, and Cys-449–Cys-470. The Disintegrin domain occupies 389-478 (RRICGNGLLE…YCLLDTYVRD (90 aa)). Asn-559 carries an N-linked (GlcNAc...) asparagine glycan. An EGF-like domain is found at 630 to 664 (DFETCEASIECSGHGICNNFNHCHCEKGYNPPHCK). Intrachain disulfides connect Cys-634-Cys-646, Cys-640-Cys-652, and Cys-654-Cys-663. A helical membrane pass occupies residues 699-719 (FQLIFYISLPVLIITTAILIK). The Cytoplasmic segment spans residues 720–756 (RKKLRELCYRGETESESSVSQESSSNSKSSLSESTSL). Residues 731-756 (ETESESSVSQESSSNSKSSLSESTSL) are disordered. Residues 735–756 (ESSVSQESSSNSKSSLSESTSL) show a composition bias toward low complexity.

Interacts with TEX101. Post-translationally, subject to proteolytic processing during epididymal transit of spermatozoa. In terms of tissue distribution, detected in testis (at protein level). Detected in adult and prepubertal testis. Detected at very low levels in heart, kidney, brain, muscle ovary and uterus.

The protein resides in the membrane. This is a non catalytic metalloprotease-like protein. May play a role in sperm-egg fusion. This is Disintegrin and metalloproteinase domain-containing protein 5 (ADAM5) from Macaca fascicularis (Crab-eating macaque).